A 167-amino-acid polypeptide reads, in one-letter code: Leptin (167 aa).

The signal sequence occupies residues 1-21; the sequence is MHCVPLFCFLWFCHHLYYSQA. Cysteine 117 and cysteine 167 form a disulfide bridge.

The protein belongs to the leptin family.

The protein localises to the secreted. Functionally, key player in the regulation of energy balance and body weight control. Once released into the circulation, has central and peripheral effects by binding LEPR, found in many tissues, which results in the activation of several major signaling pathways. In the hypothalamus, acts as an appetite-regulating factor that induces a decrease in food intake and an increase in energy consumption by inducing anorexinogenic factors and suppressing orexigenic neuropeptides, also regulates bone mass and secretion of hypothalamo-pituitary-adrenal hormones. In the periphery, increases basal metabolism, influences reproductive function, regulates pancreatic beta-cell function and insulin secretion, is pro-angiogenic for endothelial cell and affects innate and adaptive immunity. In the arcuate nucleus of the hypothalamus, activates by depolarization POMC neurons inducing FOS and SOCS3 expression to release anorexigenic peptides and inhibits by hyperpolarization NPY neurons inducing SOCS3 with a consequent reduction on release of orexigenic peptides. In addition to its known satiety inducing effect, has a modulatory role in nutrient absorption. In the intestine, reduces glucose absorption by enterocytes by activating PKC and leading to a sequential activation of p38, PI3K and ERK signaling pathways which exerts an inhibitory effect on glucose absorption. Acts as a growth factor on certain tissues, through the activation of different signaling pathways increases expression of genes involved in cell cycle regulation such as CCND1, via JAK2-STAT3 pathway, or VEGFA, via MAPK1/3 and PI3K-AKT1 pathways. May also play an apoptotic role via JAK2-STAT3 pathway and up-regulation of BIRC5 expression. Pro-angiogenic, has mitogenic activity on vascular endothelial cells and plays a role in matrix remodeling by regulating the expression of matrix metalloproteinases (MMPs) and tissue inhibitors of metalloproteinases (TIMPs). In innate immunity, modulates the activity and function of neutrophils by increasing chemotaxis and the secretion of oxygen radicals. Increases phagocytosis by macrophages and enhances secretion of pro-inflammatory mediators. Increases cytotoxic ability of NK cells. Plays a pro-inflammatory role, in synergy with IL1B, by inducing NOS2 which promotes the production of IL6, IL8 and Prostaglandin E2, through a signaling pathway that involves JAK2, PI3K, MAP2K1/MEK1 and MAPK14/p38. In adaptive immunity, promotes the switch of memory T-cells towards T helper-1 cell immune responses. Increases CD4(+)CD25(-) T-cell proliferation and reduces autophagy during TCR (T-cell receptor) stimulation, through MTOR signaling pathway activation and BCL2 up-regulation. The protein is Leptin (LEP) of Sminthopsis crassicaudata (Fat-tailed dunnart).